A 157-amino-acid polypeptide reads, in one-letter code: Ciliary microtubule inner protein 5 (157 aa).

Disordered regions lie at residues 1–57 and 92–124; these read MGSR…SALG and DPMG…AVGS. The span at 92 to 109 shows a compositional bias: basic and acidic residues; sequence DPMGNKKEPVKLPDHVPR.

The protein resides in the cell projection. The protein localises to the cilium. This chain is Ciliary microtubule inner protein 5 (CIMIP5), found in Bos taurus (Bovine).